A 729-amino-acid polypeptide reads, in one-letter code: DNA topoisomerase 3 (729 aa).

One can recognise a Toprim domain in the interval 3 to 136; the sequence is KKAVLAEKPS…VKRLWISSVT (134 aa). Positions 9 and 105 each coordinate Mg(2+). The Topo IA-type catalytic domain occupies 153-590; the sequence is YETLYAAAAA…EMKEYAKAVV (438 aa). The tract at residues 187–192 is interaction with DNA; it reads SCGRVQ. Tyr311 acts as the O-(5'-phospho-DNA)-tyrosine intermediate in catalysis. The interval 680–708 is disordered; it reads FEQRRKQNKHKNVSKREVQSYMKKQNKQD.

This sequence belongs to the type IA topoisomerase family. The cofactor is Mg(2+).

It carries out the reaction ATP-independent breakage of single-stranded DNA, followed by passage and rejoining.. In terms of biological role, releases the supercoiling and torsional tension of DNA, which is introduced during the DNA replication and transcription, by transiently cleaving and rejoining one strand of the DNA duplex. Introduces a single-strand break via transesterification at a target site in duplex DNA. The scissile phosphodiester is attacked by the catalytic tyrosine of the enzyme, resulting in the formation of a DNA-(5'-phosphotyrosyl)-enzyme intermediate and the expulsion of a 3'-OH DNA strand. The free DNA strand then undergoes passage around the unbroken strand, thus removing DNA supercoils. Finally, in the religation step, the DNA 3'-OH attacks the covalent intermediate to expel the active-site tyrosine and restore the DNA phosphodiester backbone. The protein is DNA topoisomerase 3 of Shouchella clausii (strain KSM-K16) (Alkalihalobacillus clausii).